Reading from the N-terminus, the 164-residue chain is Transcription antitermination protein NusB (164 aa).

It belongs to the NusB family.

Functionally, involved in transcription antitermination. Required for transcription of ribosomal RNA (rRNA) genes. Binds specifically to the boxA antiterminator sequence of the ribosomal RNA (rrn) operons. This is Transcription antitermination protein NusB from Chlamydia muridarum (strain MoPn / Nigg).